The following is a 102-amino-acid chain: Glutaredoxin 1 (102 aa).

The region spanning 1 to 96 (MNKAILHTII…KLLENQPKTT (96 aa)) is the Glutaredoxin domain. A disulfide bridge connects residues C17 and C20.

This sequence belongs to the glutaredoxin family. As to quaternary structure, monomer.

The protein localises to the cytoplasm. In terms of biological role, has a glutathione-disulfide oxidoreductase activity in the presence of NADPH and glutathione reductase. Reduces low molecular weight disulfides and proteins. This chain is Glutaredoxin 1 (grxC1), found in Rickettsia conorii (strain ATCC VR-613 / Malish 7).